Reading from the N-terminus, the 306-residue chain is Ciliary microtubule inner protein 2B (306 aa).

The interval 61–92 (QSNPFPPPRDHSFDGGSQELGGRRQHPGDPNL) is disordered.

The protein belongs to the CIMIP2 family. Expressed in airway epithelial cells.

The protein resides in the cytoplasm. It localises to the cytoskeleton. Its subcellular location is the cilium axoneme. Microtubule inner protein (MIP) part of the dynein-decorated doublet microtubules (DMTs) in cilia axoneme, which is required for motile cilia beating. This is Ciliary microtubule inner protein 2B (cimip2b) from Xenopus tropicalis (Western clawed frog).